Here is a 122-residue protein sequence, read N- to C-terminus: Large ribosomal subunit protein uL14 (122 aa).

The protein belongs to the universal ribosomal protein uL14 family. Part of the 50S ribosomal subunit. Forms a cluster with proteins L3 and L19. In the 70S ribosome, L14 and L19 interact and together make contacts with the 16S rRNA in bridges B5 and B8.

Its function is as follows. Binds to 23S rRNA. Forms part of two intersubunit bridges in the 70S ribosome. This chain is Large ribosomal subunit protein uL14, found in Helicobacter hepaticus (strain ATCC 51449 / 3B1).